Consider the following 142-residue polypeptide: Small ribosomal subunit protein uS19 (142 aa).

Belongs to the universal ribosomal protein uS19 family. In terms of assembly, component of the small ribosomal subunit. Mature ribosomes consist of a small (40S) and a large (60S) subunit. The 40S subunit contains about 32 different proteins and 1 molecule of RNA (18S). The 60S subunit contains 45 different proteins and 3 molecules of RNA (25S, 5.8S and 5S).

Its subcellular location is the cytoplasm. Component of the ribosome, a large ribonucleoprotein complex responsible for the synthesis of proteins in the cell. The small ribosomal subunit (SSU) binds messenger RNAs (mRNAs) and translates the encoded message by selecting cognate aminoacyl-transfer RNA (tRNA) molecules. The large subunit (LSU) contains the ribosomal catalytic site termed the peptidyl transferase center (PTC), which catalyzes the formation of peptide bonds, thereby polymerizing the amino acids delivered by tRNAs into a polypeptide chain. The nascent polypeptides leave the ribosome through a tunnel in the LSU and interact with protein factors that function in enzymatic processing, targeting, and the membrane insertion of nascent chains at the exit of the ribosomal tunnel. RPS15 has a role in the late stage of the assembly of pre-40S particles within the nucleus and controls their export to the cytoplasm. In Candida albicans (strain SC5314 / ATCC MYA-2876) (Yeast), this protein is Small ribosomal subunit protein uS19 (RPS15).